A 114-amino-acid polypeptide reads, in one-letter code: MATGAQSFYELYRRSSIGLALTDTLDDLISDERINPQLAMKILGNFDQAITEALQKNVKARLQFKGSLDTYRFCDEVWTFLIKNVTFKMDTGGQAVTANKVKIVSCNAKKPEGT.

Belongs to the TFIIA subunit 2 family. In terms of assembly, TFIIA is a heterodimer composed of the large toa1 and the small toa2 subunits.

It localises to the nucleus. Its function is as follows. TFIIA is a component of the transcription machinery of RNA polymerase II and plays an important role in transcriptional activation. TFIIA in a complex with tbp mediates transcriptional activity. The protein is Transcription initiation factor IIA subunit 2 (toa2) of Fusarium vanettenii (strain ATCC MYA-4622 / CBS 123669 / FGSC 9596 / NRRL 45880 / 77-13-4) (Fusarium solani subsp. pisi).